The primary structure comprises 193 residues: UPF0301 protein Bfl251 (193 aa).

It belongs to the UPF0301 (AlgH) family.

This chain is UPF0301 protein Bfl251, found in Blochmanniella floridana.